A 159-amino-acid chain; its full sequence is Protein Smg homolog (159 aa).

This sequence belongs to the Smg family.

The sequence is that of Protein Smg homolog from Nitrosococcus oceani (strain ATCC 19707 / BCRC 17464 / JCM 30415 / NCIMB 11848 / C-107).